A 105-amino-acid chain; its full sequence is Small ribosomal subunit protein uS10 (105 aa).

Belongs to the universal ribosomal protein uS10 family. As to quaternary structure, part of the 30S ribosomal subunit.

Functionally, involved in the binding of tRNA to the ribosomes. This Rickettsia akari (strain Hartford) protein is Small ribosomal subunit protein uS10.